The sequence spans 841 residues: Toll-like receptor 4 (841 aa).

Positions 1–23 (MIPRIRLAVATIPAMAFLSCLRS) are cleaved as a signal peptide. Topologically, residues 24–632 (ESWDPCVQVV…FRNATCQISE (609 aa)) are extracellular. A disulfide bridge links Cys29 with Cys40. A glycan (N-linked (GlcNAc...) asparagine) is linked at Asn35. LRR repeat units lie at residues 55-76 (SVKILDLSFNYLSHLDSNSFSS), 79-100 (ELQVLDLSRCEIQTIDDDAYQG), 103-124 (YLSTLILTGNPIQSLALGAFSG), 127-148 (SLQKLVAVETNLASLEDFPIGH), 151-172 (TLNELNVAHNHIHSFKLPEYFS), 176-197 (NLEHLDLSKNKIENIYHEHLQV), and 205-225 (NLSLDLSLNPLNFIEPGAFNK). N-linked (GlcNAc...) asparagine glycosylation is found at Asn205, Asn238, Asn282, and Asn309. Cys281 and Cys306 are joined by a disulfide. LRR repeat units follow at residues 374–395 (NLQFLDLSGNHLSFKGCCSHNE), 400–422 (KLKHLDLSFNEIITMKSNFMGLE), 423–444 (QLEYLDFQHSSLKQANDFSIFL), 448–469 (NLHYLDISYTNIHVVFRGIFAG), 472–495 (SLQTLKMAGNSFQNNLLPDVFTDL), 497–518 (NLILLDLSKCQLEQVSQRAFHS), 521–542 (RLQVLNMSHNRLLFLDTLPYKP), and 545–568 (SLRILDCSYNLIVASKEQELQHLP). Cys390 and Cys391 form a disulfide bridge. The N-linked (GlcNAc...) asparagine glycan is linked to Asn526. N-linked (GlcNAc...) asparagine glycosylation occurs at Asn575. One can recognise an LRRCT domain in the interval 579-630 (NDFSCACEHQTFLQWVKDQKQLLVGAEQMVCTQPLEMQDLPVLSFRNATCQI). 2 disulfides stabilise this stretch: Cys583-Cys609 and Cys585-Cys628. Residue Asn625 is glycosylated (N-linked (GlcNAc...) asparagine). Residues 633 to 653 (AVISASVLTFLLVSVAGILVY) traverse the membrane as a helical segment. The Cytoplasmic segment spans residues 654–841 (KFYFHLLLFV…SNQHDTTAFT (188 aa)). A TIR domain is found at 673-816 (STYDAFVIYS…IFWRRLKKAL (144 aa)).

The protein belongs to the Toll-like receptor family. Belongs to the lipopolysaccharide (LPS) receptor, a multi-protein complex containing at least CD14, LY96 and TLR4. Binding to bacterial LPS leads to homodimerization. Interacts with LY96 via the extracellular domain. Interacts with MYD88 and TIRAP via their respective TIR domains. Interacts with NOX4. Interacts with CNPY3 and HSP90B1; this interaction is required for proper folding in the endoplasmic reticulum. Interacts with MAP3K21; this interaction leads to negative regulation of TLR4 signaling. Interacts with CD36, following CD36 stimulation by oxLDL or amyloid-beta 42, and forms a heterodimer with TLR6. The trimeric complex is internalized and triggers inflammatory response. LYN kinase activity facilitates TLR4-TLR6 heterodimerization and signal initiation. Interacts with TICAM1 in response to LPS in a WDFY1-dependent manner. Interacts with WDFY1 in response to LPS. Interacts with SMPDL3B. Interacts with CEACAM1; upon lipopolysaccharide stimulation, forms a complex including TLR4 and the phosphorylated form of SYK and CEACAM1, which in turn, recruits PTPN6 that dephosphorylates SYK, reducing the production of reactive oxygen species (ROS) and lysosome disruption, which in turn, reduces the activity of the inflammasome. Interacts with RFTN1; the interaction occurs in response to lipopolysaccharide stimulation. Interacts with SCIMP; the interaction occurs in response to lipopolysaccharide stimulation and is enhanced by phosphorylation of SCIMP by LYN. This interaction facilitates the phosphorylation of TLR4 by LYN which elicits a selective cytokine response in macrophages. Interacts with TRAF3IP3. Interacts with TREM1; this interaction enhances TLR4-mediated inflammatory response. Interacts with ZG16B/PAUF. Interacts with CD82; this interaction inhibits TLR4-mediated signaling pathway. Post-translationally, phosphorylated on tyrosine residues by LYN after binding lipopolysaccharide. Ubiquitinated by RNF128 via 'Lys-28'-linked polyubiquitin chains, leading to proteasomal degradation.

Its subcellular location is the cell membrane. The protein localises to the early endosome. It is found in the cell projection. The protein resides in the ruffle. In terms of biological role, transmembrane receptor that functions as a pattern recognition receptor recognizing pathogen- and damage-associated molecular patterns (PAMPs and DAMPs) to induce innate immune responses via downstream signaling pathways. At the plasma membrane, cooperates with LY96 to mediate the innate immune response to bacterial lipopolysaccharide (LPS). Also involved in LPS-independent inflammatory responses triggered by free fatty acids, such as palmitate, and Ni(2+). Mechanistically, acts via MYD88, TIRAP and TRAF6, leading to NF-kappa-B activation, cytokine secretion and the inflammatory response. Alternatively, CD14-mediated TLR4 internalization via endocytosis is associated with the initiation of a MYD88-independent signaling via the TICAM1-TBK1-IRF3 axis leading to type I interferon production. In addition to the secretion of proinflammatory cytokines, initiates the activation of NLRP3 inflammasome and formation of a positive feedback loop between autophagy and NF-kappa-B signaling cascade. In complex with TLR6, promotes inflammation in monocytes/macrophages by associating with TLR6 and the receptor CD86. Upon ligand binding, such as oxLDL or amyloid-beta 42, the TLR4:TLR6 complex is internalized and triggers inflammatory response, leading to NF-kappa-B-dependent production of CXCL1, CXCL2 and CCL9 cytokines, via MYD88 signaling pathway, and CCL5 cytokine, via TICAM1 signaling pathway. In myeloid dendritic cells, vesicular stomatitis virus glycoprotein G but not LPS promotes the activation of IRF7, leading to type I IFN production in a CD14-dependent manner. This chain is Toll-like receptor 4 (TLR4), found in Sus scrofa (Pig).